Consider the following 549-residue polypeptide: Glucose-6-phosphate isomerase (549 aa).

Residue Glu355 is the Proton donor of the active site. Catalysis depends on residues His386 and Lys514.

This sequence belongs to the GPI family.

Its subcellular location is the cytoplasm. The catalysed reaction is alpha-D-glucose 6-phosphate = beta-D-fructose 6-phosphate. It participates in carbohydrate biosynthesis; gluconeogenesis. It functions in the pathway carbohydrate degradation; glycolysis; D-glyceraldehyde 3-phosphate and glycerone phosphate from D-glucose: step 2/4. Its function is as follows. Catalyzes the reversible isomerization of glucose-6-phosphate to fructose-6-phosphate. This chain is Glucose-6-phosphate isomerase, found in Salmonella choleraesuis (strain SC-B67).